Consider the following 394-residue polypeptide: Probable dual specificity protein phosphatase DDB_G0281963 (394 aa).

The Tyrosine-protein phosphatase domain occupies Asn2–Lys142. Cys86 (phosphocysteine intermediate) is an active-site residue. A disordered region spans residues Pro147–Val191. A compositionally biased stretch (acidic residues) spans Glu153–Asp188.

Belongs to the protein-tyrosine phosphatase family. Non-receptor class dual specificity subfamily.

It carries out the reaction O-phospho-L-tyrosyl-[protein] + H2O = L-tyrosyl-[protein] + phosphate. The enzyme catalyses O-phospho-L-seryl-[protein] + H2O = L-seryl-[protein] + phosphate. The catalysed reaction is O-phospho-L-threonyl-[protein] + H2O = L-threonyl-[protein] + phosphate. Functionally, has a dual specificity toward Ser/Thr and Tyr-containing proteins. This chain is Probable dual specificity protein phosphatase DDB_G0281963, found in Dictyostelium discoideum (Social amoeba).